Consider the following 202-residue polypeptide: Helix-loop-helix protein 10 (202 aa).

Disordered regions lie at residues 1–26 (MESSSMTTHQEEPLDLSTGNHGNSEL) and 83–112 (QNKSEVNDENESTPSPTQNSRRRTSTGKID). Polar residues predominate over residues 17 to 26 (STGNHGNSEL). The interval 121–134 (TRRYEANARERNRV) is basic motif. A bHLH domain is found at 121–172 (TRRYEANARERNRVQQLSKMFDQLRVCLPIEDDAKISKLATLKVASSYIGYL). Residues 135 to 172 (QQLSKMFDQLRVCLPIEDDAKISKLATLKVASSYIGYL) form a helix-loop-helix motif region.

In terms of assembly, heterodimer with hlh-2. As to expression, expressed in intestine, neurons in head, body and tail, and in body hypodermis, and vulva. Expressed in neurons in the male-specific genital sensilla (simple sense organs) known as rays.

Its subcellular location is the nucleus. The protein resides in the cytoplasm. Functionally, probable transcription factor which binds the E box motif 5'-CA[TC][AG]TG-3'. The sequence is that of Helix-loop-helix protein 10 from Caenorhabditis elegans.